We begin with the raw amino-acid sequence, 392 residues long: DNA-directed RNA polymerase subunit Rpo1C (392 aa).

The protein belongs to the RNA polymerase beta' chain family. As to quaternary structure, part of the 13-subunit RNA polymerase complex.

It is found in the cytoplasm. It catalyses the reaction RNA(n) + a ribonucleoside 5'-triphosphate = RNA(n+1) + diphosphate. DNA-dependent RNA polymerase (RNAP) catalyzes the transcription of DNA into RNA using the four ribonucleoside triphosphates as substrates. Forms part of the jaw domain. The chain is DNA-directed RNA polymerase subunit Rpo1C from Saccharolobus solfataricus (strain ATCC 35092 / DSM 1617 / JCM 11322 / P2) (Sulfolobus solfataricus).